A 150-amino-acid polypeptide reads, in one-letter code: UPF0336 protein SGR_2883 (150 aa).

A MaoC-like domain is found at 10 to 116; the sequence is RTYPPTPAYE…STIEAVKSLA (107 aa).

This sequence belongs to the UPF0336 family.

The protein is UPF0336 protein SGR_2883 of Streptomyces griseus subsp. griseus (strain JCM 4626 / CBS 651.72 / NBRC 13350 / KCC S-0626 / ISP 5235).